The primary structure comprises 263 residues: Microtubule-associated protein RP/EB family member 1 (263 aa).

The 103-residue stretch at 14–116 folds into the Calponin-homology (CH) domain; it reads NLSRHDMLAW…FVQWFKKFFD (103 aa). Residues 180–250 form the EB1 C-terminal domain; it reads KKAAGDDESA…LYATDEGFVI (71 aa).

The protein belongs to the MAPRE family.

It is found in the cytoplasm. The protein localises to the cytoskeleton. The protein resides in the microtubule organizing center. It localises to the centrosome. Its subcellular location is the golgi apparatus. It is found in the spindle. The protein localises to the spindle pole. Its function is as follows. Plus-end tracking protein (+TIP) that binds to the plus-end of microtubules and regulates the dynamics of the microtubule cytoskeleton. Promotes cytoplasmic microtubule nucleation and elongation. Involved in mitotic spindle positioning by stabilizing microtubules and promoting dynamic connection between astral microtubules and the cortex during mitotic chromosome segregation. This chain is Microtubule-associated protein RP/EB family member 1 (MAPRE1), found in Coturnix coturnix (Common quail).